A 150-amino-acid chain; its full sequence is Ribosomal RNA large subunit methyltransferase H (150 aa).

Residues Ala100 and 118–123 (LSEMTF) each bind S-adenosyl-L-methionine.

This sequence belongs to the RNA methyltransferase RlmH family. In terms of assembly, homodimer.

It is found in the cytoplasm. The catalysed reaction is pseudouridine(1915) in 23S rRNA + S-adenosyl-L-methionine = N(3)-methylpseudouridine(1915) in 23S rRNA + S-adenosyl-L-homocysteine + H(+). Functionally, specifically methylates the pseudouridine at position 1915 (m3Psi1915) in 23S rRNA. This chain is Ribosomal RNA large subunit methyltransferase H, found in Helicobacter pylori (strain Shi470).